Consider the following 1097-residue polypeptide: Chitin synthase 2 (1097 aa).

The disordered stretch occupies residues 1 to 46 (MAGYGHSTAGGFGSGSGSGPPGPQYMLPQYDEGDDPDADATPAGQG). Residues 1–748 (MAGYGHSTAG…HVEFLYHLLQ (748 aa)) are Extracellular-facing. Positions 8-19 (TAGGFGSGSGSG) are enriched in gly residues. Asn-55 is a glycosylation site (N-linked (GlcNAc...) asparagine). Disordered stretches follow at residues 148–217 (SGHG…YPRY) and 259–322 (SSQI…RPPQ). Residues 284–296 (STTYSSNTGTSAS) are compositionally biased toward polar residues. The segment covering 299–313 (DKFEHYGPIPEEGKH) has biased composition (basic and acidic residues). 2 N-linked (GlcNAc...) asparagine glycosylation sites follow: Asn-416 and Asn-424. The chain crosses the membrane as a helical span at residues 749–769 (LLFTYFSLANFYLAFYFIAGG). At 770–786 (LADPHVDPFNSDGHVAR) the chain is on the cytoplasmic side. Residues 787-807 (IIFNILRYVCVLLICTQFILS) traverse the membrane as a helical segment. The Extracellular segment spans residues 808 to 821 (LGNRPQGAKRMYLA). A helical membrane pass occupies residues 822–842 (SMIIYAVIMVYTTFATIFIVV). Over 843–865 (RQIQPSQKSDDKPDLELGNNVFT) the chain is Cytoplasmic. The helical transmembrane segment at 866–886 (NLIVSVASTLGLYFVMSFLYL) threads the bilayer. At 887-894 (DPWHMFTS) the chain is on the extracellular side. A helical membrane pass occupies residues 895-915 (AIQYFVLLPSYICTLQIYAFC). The Cytoplasmic segment spans residues 916-993 (NTHDVTWGTK…QDYYKSVRTY (78 aa)). The helical transmembrane segment at 994–1014 (MVVSWMVANATLAMAVSEAYG) threads the bilayer. The Extracellular portion of the chain corresponds to 1015-1025 (DSEIGDNFYLR). Residues 1026–1046 (FILWAVAALALFRALGSTTFA) form a helical membrane-spanning segment. Topologically, residues 1047–1097 (AINLVSALVEGRVRLRLNMKGFRWIKEKWGDADVKGKFEGLGDRARGLARR) are cytoplasmic.

It belongs to the chitin synthase family.

It is found in the cell membrane. It carries out the reaction [(1-&gt;4)-N-acetyl-beta-D-glucosaminyl](n) + UDP-N-acetyl-alpha-D-glucosamine = [(1-&gt;4)-N-acetyl-beta-D-glucosaminyl](n+1) + UDP + H(+). Its function is as follows. Polymerizes chitin, a structural polymer of the cell wall and septum, by transferring the sugar moiety of UDP-GlcNAc to the non-reducing end of the growing chitin polymer. The protein is Chitin synthase 2 (chs-2) of Neurospora crassa (strain ATCC 24698 / 74-OR23-1A / CBS 708.71 / DSM 1257 / FGSC 987).